A 52-amino-acid polypeptide reads, in one-letter code: Large ribosomal subunit protein bL32c (52 aa).

Belongs to the bacterial ribosomal protein bL32 family.

It is found in the plastid. The protein localises to the chloroplast. This chain is Large ribosomal subunit protein bL32c, found in Capsella bursa-pastoris (Shepherd's purse).